Reading from the N-terminus, the 145-residue chain is uncharacterized protein (145 aa).

This sequence belongs to the methyltransferase superfamily.

In terms of biological role, probable methyltransferase. This is an uncharacterized protein from Schizosaccharomyces pombe (strain 972 / ATCC 24843) (Fission yeast).